Reading from the N-terminus, the 213-residue chain is Ribosomal RNA small subunit methyltransferase G (213 aa).

S-adenosyl-L-methionine-binding positions include Gly-55, 105 to 106, and Arg-124; that span reads AE.

This sequence belongs to the methyltransferase superfamily. RNA methyltransferase RsmG family.

It is found in the cytoplasm. Its function is as follows. Specifically methylates the N7 position of a guanine in 16S rRNA. The protein is Ribosomal RNA small subunit methyltransferase G of Fervidobacterium nodosum (strain ATCC 35602 / DSM 5306 / Rt17-B1).